Reading from the N-terminus, the 258-residue chain is Methanol--corrinoid protein (258 aa).

The B12-binding N-terminal domain occupies 30-124; sequence AEELYPKDEL…NSGATPKTKG (95 aa). Positions 123–248 constitute a B12-binding domain; that stretch reads KGTVVCHVAE…DAIIAGTTDV (126 aa). His136 provides a ligand contact to methylcob(III)alamin.

It belongs to the methylamine corrinoid protein family. As to quaternary structure, heterotetramer, composed of 2 MtaB and 2 MtaC subunits.

Its function is as follows. Harbors a corrinoid prosthetic group and acts as a methyl group carrier in methanogenesis in the methanol pathway. The methyl group of methanol is first transferred to the corrinoid prosthetic group of MtaC in the cob(I)amide oxidation state. This reaction is mediated by MtaB. The methyl group from MtaC is then transferred to coenzyme M by MtaA. The polypeptide is Methanol--corrinoid protein (mtaC) (Methanosarcina barkeri (strain Fusaro / DSM 804)).